A 320-amino-acid polypeptide reads, in one-letter code: Lipoyl synthase (320 aa).

The disordered stretch occupies residues 1-28; that stretch reads MVTVVDRVTDRRLRHPEKAHRPDTSVQK. Residues 19 to 28 are compositionally biased toward basic and acidic residues; sequence AHRPDTSVQK. 7 residues coordinate [4Fe-4S] cluster: cysteine 59, cysteine 64, cysteine 70, cysteine 85, cysteine 89, cysteine 92, and serine 298. The Radical SAM core domain occupies 71 to 287; that stretch reads WSQRHASFMI…AKIGKVKGFL (217 aa).

The protein belongs to the radical SAM superfamily. Lipoyl synthase family. [4Fe-4S] cluster serves as cofactor.

The protein localises to the cytoplasm. It catalyses the reaction [[Fe-S] cluster scaffold protein carrying a second [4Fe-4S](2+) cluster] + N(6)-octanoyl-L-lysyl-[protein] + 2 oxidized [2Fe-2S]-[ferredoxin] + 2 S-adenosyl-L-methionine + 4 H(+) = [[Fe-S] cluster scaffold protein] + N(6)-[(R)-dihydrolipoyl]-L-lysyl-[protein] + 4 Fe(3+) + 2 hydrogen sulfide + 2 5'-deoxyadenosine + 2 L-methionine + 2 reduced [2Fe-2S]-[ferredoxin]. Its pathway is protein modification; protein lipoylation via endogenous pathway; protein N(6)-(lipoyl)lysine from octanoyl-[acyl-carrier-protein]: step 2/2. Catalyzes the radical-mediated insertion of two sulfur atoms into the C-6 and C-8 positions of the octanoyl moiety bound to the lipoyl domains of lipoate-dependent enzymes, thereby converting the octanoylated domains into lipoylated derivatives. The sequence is that of Lipoyl synthase from Bartonella henselae (strain ATCC 49882 / DSM 28221 / CCUG 30454 / Houston 1) (Rochalimaea henselae).